The chain runs to 146 residues: Lysozyme C-2 (146 aa).

The N-terminal stretch at 1–18 (MKTLLVLALLLLSVSVQA) is a signal peptide. The region spanning 19–146 (KVYDRCEFAR…VSQYIRGCKL (128 aa)) is the C-type lysozyme domain. 4 cysteine pairs are disulfide-bonded: Cys24-Cys144, Cys48-Cys132, Cys81-Cys97, and Cys93-Cys111. Catalysis depends on residues Glu53 and Asp69.

It belongs to the glycosyl hydrolase 22 family. Monomer.

It localises to the secreted. It carries out the reaction Hydrolysis of (1-&gt;4)-beta-linkages between N-acetylmuramic acid and N-acetyl-D-glucosamine residues in a peptidoglycan and between N-acetyl-D-glucosamine residues in chitodextrins.. Functionally, lysozymes have primarily a bacteriolytic function; those in tissues and body fluids are associated with the monocyte-macrophage system and enhance the activity of immunoagents. The protein is Lysozyme C-2 of Sus scrofa (Pig).